The following is a 503-amino-acid chain: Diels-Alderase cghA (503 aa).

Belongs to the Diels-Alderase family.

The enzyme catalyses (2S)-3-[(2S)-3,5-dioxo-4-[(2E,4R,6R,8E,10E,12E)-4,6,12-trimethyltetradeca-2,8,10,12-tetraenoyl]pyrrolidin-2-yl]-2-hydroxy-2-methylpropanoate = sch 210972. The protein operates within secondary metabolite biosynthesis. Its function is as follows. Diels-Alderase; part of the gene cluster that mediates the biosynthesis of the tetramic acid Sch210972, a potential anti-HIV fungal natural product that contains a decalin core. The PKS module of cghG together with the enoylreductase cghC catalyze the formation of the polyketide unit which is then conjugated to 4-hydroxyl-4-methyl glutamate (HMG) by the condensation domain of the cghG NRPS module. One unique structural feature of Sch210972 is the tetramic acid motif proposed to be derived from the non-proteinogenic amino acid HMG, by a Dieckmann-type condensation catalyzed by the reductase domain of cghG. The aldolase cghB catalyzes the aldol condensation of 2 molecules of pyruvic acid to yield the intermediate 4-hydroxyl-4-methyl-2-oxoglutarate (HMOG), which can then be stereoselectively transaminated by an unidentified enzyme to form HMG. The Diels-Alderase cghA then uses the Dieckmann product released by cghG as substrate and catalyzes the Diels-Alder cycloaddition to form the decalin ring of Sch210972. CghA also suppresses the nonenzymatic formation of the alternative stereoisomer. The sequence is that of Diels-Alderase cghA from Chaetomium globosum (strain ATCC 6205 / CBS 148.51 / DSM 1962 / NBRC 6347 / NRRL 1970) (Soil fungus).